Consider the following 324-residue polypeptide: MFTTAFAQREQTQPGGLPLDLFAAIESLKKELNAVILAHYYQEPDIQDIADFIGDSLQLARAAAQTNADVIVFAGVHFMAETAKILNPEKLVLLPDLNAGCSLADSCPPKEFAAFKAAHPDHLVVSYINCSAEIKAMSDIICTSSNAVKIVQQIPKEQPIIFAPDRNLGRYVMEQTGRDLVLWQGSCLVHETFSEKKIVQLKVAHPQAEAIAHPECESSVLRHASFIGSTAALLQYCQTSPSQEFIVATEPGIIHQMQKLAPNKHFIPAPPINNCACNECPFMRLNTLEKLYWAMKNRTPEITMSEDIRLAALRPMQRMLEMSN.

The iminosuccinate site is built by His-39 and Ser-56. Cys-101 contacts [4Fe-4S] cluster. Iminosuccinate-binding positions include 127–129 (YIN) and Ser-144. Cys-187 contributes to the [4Fe-4S] cluster binding site. Residues 213 to 215 (HPE) and Thr-230 each bind iminosuccinate. Cys-280 contacts [4Fe-4S] cluster.

Belongs to the quinolinate synthase family. Type 2 subfamily. [4Fe-4S] cluster is required as a cofactor.

Its subcellular location is the cytoplasm. It catalyses the reaction iminosuccinate + dihydroxyacetone phosphate = quinolinate + phosphate + 2 H2O + H(+). It participates in cofactor biosynthesis; NAD(+) biosynthesis; quinolinate from iminoaspartate: step 1/1. Catalyzes the condensation of iminoaspartate with dihydroxyacetone phosphate to form quinolinate. The protein is Quinolinate synthase of Nostoc sp. (strain PCC 7120 / SAG 25.82 / UTEX 2576).